Reading from the N-terminus, the 159-residue chain is uncharacterized protein (159 aa).

This sequence belongs to the IIV-6 136R family.

This is an uncharacterized protein from Invertebrate iridescent virus 3 (IIV-3).